We begin with the raw amino-acid sequence, 424 residues long: Lactate racemase (424 aa).

72-75 (DHTR) contacts Ni(II)-pyridinium-3,5-bisthiocarboxylate mononucleotide. Active-site proton donor/acceptor residues include H108 and H174. Ni(II)-pyridinium-3,5-bisthiocarboxylate mononucleotide contacts are provided by K184 and H200. Positions 295 and 298 each coordinate substrate.

The protein belongs to the lactate racemase family. In terms of assembly, homodimer. Ni(II)-pyridinium-3,5-bisthiocarboxylate mononucleotide serves as cofactor.

It carries out the reaction (S)-lactate = (R)-lactate. Its activity is regulated as follows. Activation of the apo-enzyme requires the three accessory proteins LarB, LarE and LarC, that are involved in the biosynthesis of the nickel-pincer cofactor of LarA. Inhibited by sulfite that behaves as a mixed inhibitor. In terms of biological role, catalyzes the interconversion between the D- and L-isomers of lactate. May act as a rescue enzyme to ensure D-lactate production in physiological conditions where its production by the D-lactate dehydrogenase LdhD is not sufficient. D-Lactate is absolutely required for growth of L.plantarum and is an essential component of the cell wall peptidoglycan in this species, where it is incorporated as the last residue of the muramoyl-pentadepsipeptide peptidoglycan precursor; its incorporation confers high level of vancomycin resistance. This chain is Lactate racemase, found in Lactiplantibacillus plantarum (strain ATCC BAA-793 / NCIMB 8826 / WCFS1) (Lactobacillus plantarum).